Here is a 174-residue protein sequence, read N- to C-terminus: uncharacterized protein (174 aa).

Positions 1–55 (MGCVVSKSDDIKNENESRQRNQASSSQQPSSSQTPSKQIGIAAKDSEEQPQEVSY) are disordered. Residue Gly2 is the site of N-myristoyl glycine attachment. The span at 7 to 19 (KSDDIKNENESRQ) shows a compositional bias: basic and acidic residues. Over residues 20–38 (RNQASSSQQPSSSQTPSKQ) the composition is skewed to low complexity.

This is an uncharacterized protein from Dictyostelium discoideum (Social amoeba).